We begin with the raw amino-acid sequence, 530 residues long: Glutamate--tRNA ligase (530 aa).

The short motif at 26–36 is the 'HIGH' region element; sequence PSPTGKAHIGT. The 'KMSKS' region motif lies at 267 to 271; that stretch reads KLSKR. Lys270 lines the ATP pocket.

The protein belongs to the class-I aminoacyl-tRNA synthetase family. Glutamate--tRNA ligase type 1 subfamily. Monomer.

Its subcellular location is the cytoplasm. It catalyses the reaction tRNA(Glu) + L-glutamate + ATP = L-glutamyl-tRNA(Glu) + AMP + diphosphate. In terms of biological role, catalyzes the attachment of glutamate to tRNA(Glu) in a two-step reaction: glutamate is first activated by ATP to form Glu-AMP and then transferred to the acceptor end of tRNA(Glu). The protein is Glutamate--tRNA ligase of Gloeobacter violaceus (strain ATCC 29082 / PCC 7421).